The primary structure comprises 489 residues: Hydantoin permease (489 aa).

Transmembrane regions (helical) follow at residues 30–50, 58–78, 104–124, 144–164, 167–187, 207–227, 258–278, 299–321, 339–359, 362–382, 405–424, and 428–445; these read FSLA…IAAG, VWQV…LLFF, LIPI…QTWL, LWIV…ITFI, MNVF…YLML, MPFS…VVSI, LGMV…MVLV, AILF…NLLS, GVIV…AGVL, FLNL…SDYF, RGVN…VSFL, and LMFV…IPAM. Ala-38 and Ile-41 together coordinate Na(+). Gln-121 is a substrate binding site. Position 219 (Gly-219) interacts with substrate. 3 residues coordinate Na(+): Ala-309, Ser-312, and Thr-313. A substrate-binding site is contributed by Asn-318. The disordered stretch occupies residues 468 to 489; it reads PIGPVAPADESATANTKEQNQR. Positions 479-489 are enriched in polar residues; the sequence is ATANTKEQNQR.

The protein belongs to the purine-cytosine permease (2.A.39) family.

It localises to the membrane. Inhibited by dinitrophenol, 5-(2-naphthylmethyl)-D-hydantoin (D-NMH), 5-(2-naphthylmethyl)-L-hydantoin (L-NMH), 5-bromovinylhydantoin (BVH) and 5-indolylmethyl-L-hydantoin (L-IMH). The affinity of benzyl-hydantoin is increased over 10-fold in the presence of 15 mM of sodium. Its function is as follows. Nucleobase-proton symporter that mediates the sodium-dependent binding and uptake of 5-aryl-substituted hydantoin compounds. 5-indolyl methyl hydantoin and 5-benzyl hydantoin are the preferred substrates, with selectivity for a hydrophobic substituent in position 5 of hydantoin and for the L isomer over the D isomer. This chain is Hydantoin permease, found in Microbacterium maritypicum (Microbacterium liquefaciens).